Consider the following 428-residue polypeptide: 5'-deoxyadenosine deaminase (428 aa).

Zn(2+) contacts are provided by His59 and His61. Substrate contacts are provided by Glu88 and His180. His207 serves as a coordination point for Zn(2+). The substrate site is built by Glu210 and Asp296. Asp296 serves as a coordination point for Zn(2+).

Belongs to the metallo-dependent hydrolases superfamily. MTA/SAH deaminase family. In terms of assembly, homotetramer. It depends on Zn(2+) as a cofactor.

The enzyme catalyses 5'-deoxyadenosine + H2O + H(+) = 5'-deoxyinosine + NH4(+). It catalyses the reaction S-adenosyl-L-homocysteine + H2O + H(+) = S-inosyl-L-homocysteine + NH4(+). The catalysed reaction is S-methyl-5'-thioadenosine + H2O + H(+) = S-methyl-5'-thioinosine + NH4(+). It carries out the reaction adenosine + H2O + H(+) = inosine + NH4(+). The protein operates within amino-acid biosynthesis; S-adenosyl-L-methionine biosynthesis. Catalyzes the deamination of three SAM-derived enzymatic products, namely 5'-deoxyadenosine, S-adenosyl-L-homocysteine, and 5'-methylthioadenosine, to produce the inosine analogs. Can also deaminate adenosine. The preferred substrate for this enzyme is 5'-deoxyadenosine, but all these substrates are efficiently deaminated. Likely functions in a S-adenosyl-L-methionine (SAM) recycling pathway from S-adenosyl-L-homocysteine (SAH) produced from SAM-dependent methylation reactions. May also be involved in the recycling of 5'-deoxyadenosine, whereupon the 5'-deoxyribose moiety of 5'-deoxyinosine is further metabolized to deoxyhexoses used for the biosynthesis of aromatic amino acids in methanogens. This chain is 5'-deoxyadenosine deaminase, found in Methanococcus aeolicus (strain ATCC BAA-1280 / DSM 17508 / OCM 812 / Nankai-3).